The chain runs to 143 residues: 3-dehydroquinate dehydratase (143 aa).

Y22 (proton acceptor) is an active-site residue. Positions 73, 79, and 86 each coordinate substrate. H99 serves as the catalytic Proton donor. Substrate contacts are provided by residues 100-101 (IS) and R110.

It belongs to the type-II 3-dehydroquinase family. As to quaternary structure, homododecamer.

It catalyses the reaction 3-dehydroquinate = 3-dehydroshikimate + H2O. It participates in metabolic intermediate biosynthesis; chorismate biosynthesis; chorismate from D-erythrose 4-phosphate and phosphoenolpyruvate: step 3/7. In terms of biological role, catalyzes a trans-dehydration via an enolate intermediate. The chain is 3-dehydroquinate dehydratase from Mycolicibacterium paratuberculosis (strain ATCC BAA-968 / K-10) (Mycobacterium paratuberculosis).